Here is a 1485-residue protein sequence, read N- to C-terminus: Chromosome partition protein MukB (1485 aa).

34-41 (GGNGAGKS) contacts ATP. Coiled-coil stretches lie at residues 337–480 (LNLV…QAYQ), 509–605 (QHLA…PVWL), 780–805 (RAAR…ATLS), 835–915 (EAEI…IQQH), 977–1116 (GMLT…AKAG), and 1210–1235 (EAIE…KLAI). The segment at 666–783 (PSGAEDARLI…EVPLFGRAAR (118 aa)) is flexible hinge.

Belongs to the SMC family. MukB subfamily. In terms of assembly, homodimerization via its hinge domain. Binds to DNA via its C-terminal region. Interacts, and probably forms a ternary complex, with MukE and MukF via its C-terminal region. The complex formation is stimulated by calcium or magnesium. Interacts with tubulin-related protein FtsZ.

It localises to the cytoplasm. The protein resides in the nucleoid. Plays a central role in chromosome condensation, segregation and cell cycle progression. Functions as a homodimer, which is essential for chromosome partition. Involved in negative DNA supercoiling in vivo, and by this means organize and compact chromosomes. May achieve or facilitate chromosome segregation by condensation DNA from both sides of a centrally located replisome during cell division. In Yersinia pestis bv. Antiqua (strain Antiqua), this protein is Chromosome partition protein MukB.